Here is a 75-residue protein sequence, read N- to C-terminus: Cytochrome c oxidase subunit 6C (75 aa).

Over 1–13 the chain is Mitochondrial matrix; it reads MASSALAKPQMRG. Residues 14–54 traverse the membrane as a helical segment; sequence LLARRLRIHIVGAFVVSLGVAAFYKYAVAEPRKKAYADFYR. At 55 to 75 the chain is on the mitochondrial intermembrane side; the sequence is NYDSVKYFEEMRKAGVFQSVK.

Belongs to the cytochrome c oxidase subunit 6c family. In terms of assembly, component of the cytochrome c oxidase (complex IV, CIV), a multisubunit enzyme composed of 14 subunits. The complex is composed of a catalytic core of 3 subunits MT-CO1, MT-CO2 and MT-CO3, encoded in the mitochondrial DNA, and 11 supernumerary subunits COX4I, COX5A, COX5B, COX6A, COX6B, COX6C, COX7A, COX7B, COX7C, COX8 and NDUFA4, which are encoded in the nuclear genome. The complex exists as a monomer or a dimer and forms supercomplexes (SCs) in the inner mitochondrial membrane with NADH-ubiquinone oxidoreductase (complex I, CI) and ubiquinol-cytochrome c oxidoreductase (cytochrome b-c1 complex, complex III, CIII), resulting in different assemblies (supercomplex SCI(1)III(2)IV(1) and megacomplex MCI(2)III(2)IV(2)).

Its subcellular location is the mitochondrion inner membrane. Its pathway is energy metabolism; oxidative phosphorylation. In terms of biological role, component of the cytochrome c oxidase, the last enzyme in the mitochondrial electron transport chain which drives oxidative phosphorylation. The respiratory chain contains 3 multisubunit complexes succinate dehydrogenase (complex II, CII), ubiquinol-cytochrome c oxidoreductase (cytochrome b-c1 complex, complex III, CIII) and cytochrome c oxidase (complex IV, CIV), that cooperate to transfer electrons derived from NADH and succinate to molecular oxygen, creating an electrochemical gradient over the inner membrane that drives transmembrane transport and the ATP synthase. Cytochrome c oxidase is the component of the respiratory chain that catalyzes the reduction of oxygen to water. Electrons originating from reduced cytochrome c in the intermembrane space (IMS) are transferred via the dinuclear copper A center (CU(A)) of subunit 2 and heme A of subunit 1 to the active site in subunit 1, a binuclear center (BNC) formed by heme A3 and copper B (CU(B)). The BNC reduces molecular oxygen to 2 water molecules using 4 electrons from cytochrome c in the IMS and 4 protons from the mitochondrial matrix. The polypeptide is Cytochrome c oxidase subunit 6C (COX6C) (Nycticebus coucang (Slow loris)).